Here is a 393-residue protein sequence, read N- to C-terminus: CCA-adding enzyme (393 aa).

ATP is bound by residues G27 and R30. CTP is bound by residues G27 and R30. Positions 40 and 42 each coordinate Mg(2+). Residues R111, D154, R157, R160, and R163 each coordinate ATP. CTP-binding residues include R111, D154, R157, R160, and R163.

This sequence belongs to the tRNA nucleotidyltransferase/poly(A) polymerase family. Bacterial CCA-adding enzyme type 3 subfamily. As to quaternary structure, homodimer. Mg(2+) serves as cofactor.

It catalyses the reaction a tRNA precursor + 2 CTP + ATP = a tRNA with a 3' CCA end + 3 diphosphate. The catalysed reaction is a tRNA with a 3' CCA end + 2 CTP + ATP = a tRNA with a 3' CCACCA end + 3 diphosphate. In terms of biological role, catalyzes the addition and repair of the essential 3'-terminal CCA sequence in tRNAs without using a nucleic acid template. Adds these three nucleotides in the order of C, C, and A to the tRNA nucleotide-73, using CTP and ATP as substrates and producing inorganic pyrophosphate. tRNA 3'-terminal CCA addition is required both for tRNA processing and repair. Also involved in tRNA surveillance by mediating tandem CCA addition to generate a CCACCA at the 3' terminus of unstable tRNAs. While stable tRNAs receive only 3'-terminal CCA, unstable tRNAs are marked with CCACCA and rapidly degraded. The sequence is that of CCA-adding enzyme from Listeria monocytogenes serovar 1/2a (strain ATCC BAA-679 / EGD-e).